The chain runs to 301 residues: TLR adapter interacting with SLC15A4 on the lysosome (301 aa).

A pLxIS motif motif is present at residues 290–294 (SLHIS). At serine 294 the chain carries Phosphoserine.

In terms of assembly, interacts (via pLxIS motif) with IRF5; leading to IRF5 activation. Interacts with SLC15A4; leading to its recruitment to endolysosome. The phosphorylated pLxIS motif constitutes an IRF5-binding motif, leading to recruitment of the transcription factor IRF5 to induce type-I interferons and other cytokines. In terms of tissue distribution, highly expressed in immune cell types such as B-cells, neutrophils, dendritic cells and monocytes, the expression levels are two-three-fold higher in female cells compared to male cells (at protein level). Expressed at low levels in T-cells and NK cells.

Its subcellular location is the lysosome membrane. It localises to the endosome membrane. The protein localises to the nucleus. It is found in the cytoplasm. Innate immune adapter that mediates the recruitment and activation of IRF5 downstream of endolysosomal toll-like receptors TLR7, TLR8 and TLR9. Following recruitment to endolysosome by SLC15A4 downstream of TLR7, TLR8 and TLR9, specifically recruits IRF5 transcription factor via its pLxIS motif, leading to IRF5 activation and subsequent expression of type I interferons. Plays a role in the regulation of endolysosomal pH in immune cells such as B-cells, dendritic cells and monocytes. The sequence is that of TLR adapter interacting with SLC15A4 on the lysosome from Homo sapiens (Human).